Here is a 472-residue protein sequence, read N- to C-terminus: Siroheme synthase 1 (472 aa).

The interval 1 to 203 is precorrin-2 dehydrogenase /sirohydrochlorin ferrochelatase; sequence MDYLPLFADL…GQLAQAEEEL (203 aa). Residues 22 to 23 and 43 to 44 each bind NAD(+); these read EV and QT. Ser-128 is modified (phosphoserine). Residues 215-472 form a uroporphyrinogen-III C-methyltransferase region; sequence GEVALVGAGP…AISPSVVNLA (258 aa). Pro-224 is a binding site for S-adenosyl-L-methionine. Residue Asp-247 is the Proton acceptor of the active site. The active-site Proton donor is Lys-269. S-adenosyl-L-methionine-binding positions include 300 to 302, Ile-305, 330 to 331, Met-382, and Gly-411; these read GGD and TA.

The protein in the N-terminal section; belongs to the precorrin-2 dehydrogenase / sirohydrochlorin ferrochelatase family. It in the C-terminal section; belongs to the precorrin methyltransferase family.

The enzyme catalyses uroporphyrinogen III + 2 S-adenosyl-L-methionine = precorrin-2 + 2 S-adenosyl-L-homocysteine + H(+). It carries out the reaction precorrin-2 + NAD(+) = sirohydrochlorin + NADH + 2 H(+). It catalyses the reaction siroheme + 2 H(+) = sirohydrochlorin + Fe(2+). It participates in cofactor biosynthesis; adenosylcobalamin biosynthesis; precorrin-2 from uroporphyrinogen III: step 1/1. Its pathway is cofactor biosynthesis; adenosylcobalamin biosynthesis; sirohydrochlorin from precorrin-2: step 1/1. The protein operates within porphyrin-containing compound metabolism; siroheme biosynthesis; precorrin-2 from uroporphyrinogen III: step 1/1. It functions in the pathway porphyrin-containing compound metabolism; siroheme biosynthesis; siroheme from sirohydrochlorin: step 1/1. It participates in porphyrin-containing compound metabolism; siroheme biosynthesis; sirohydrochlorin from precorrin-2: step 1/1. Functionally, multifunctional enzyme that catalyzes the SAM-dependent methylations of uroporphyrinogen III at position C-2 and C-7 to form precorrin-2 via precorrin-1. Then it catalyzes the NAD-dependent ring dehydrogenation of precorrin-2 to yield sirohydrochlorin. Finally, it catalyzes the ferrochelation of sirohydrochlorin to yield siroheme. The chain is Siroheme synthase 1 from Yersinia enterocolitica serotype O:8 / biotype 1B (strain NCTC 13174 / 8081).